The following is a 216-amino-acid chain: Cytidylate kinase (216 aa).

Gly7 to Thr15 provides a ligand contact to ATP.

The protein belongs to the cytidylate kinase family. Type 1 subfamily.

The protein resides in the cytoplasm. The enzyme catalyses CMP + ATP = CDP + ADP. The catalysed reaction is dCMP + ATP = dCDP + ADP. The chain is Cytidylate kinase from Chlamydia muridarum (strain MoPn / Nigg).